The primary structure comprises 544 residues: MSKFVFVTGGVVSSVGKGITVASLGNILKSRGLSVSVQKLDPYLNVDPGTMSPYQHGEVFVTQDGAETDLDLGSYERFIDIELTADSTVTSGQVYSEVINKERRGDYLGGTIQVVPHVTQEIKARIQRLADRSKADVVIVEVGGTVGDIEGQPFLEAIRQMRNDMGRDNVIYIHVTLLPYIQSTQELKTKPTQHSVNELRRIGIQPDIIVCRADYPISEGIRDKLSLFCDVERKAVIFMPTVSTIYEVPLKLESEGVGDLLVSRLHLNASPSDLSIWRGLVEKIKEPTPAVRIALVGKYVELKDAYYSVRESLCHAAIHNGRDIQIDWVYAEDIEKNGPEEYLKHVQGIIIPGGFGIRGIEGMITAVKYARENGIPYLGLCLGMQVMVIEFARHVLQSDKAHSTEFEPDSPYPVIDLLPEQRGVDSKGGTMRLGNYPCVIQPGTMAGQAYGNKLINERHRHRFEFNNDYRDTLSKAGMVFSGLSPDGKLVEICEVSGHPFMVGSQFHPEFLSRPNRPHPLFREFINAAKKVIRDGEQPSLPLSP.

Positions 1–267 (MSKFVFVTGG…GDLLVSRLHL (267 aa)) are amidoligase domain. Residue Ser13 coordinates CTP. Ser13 serves as a coordination point for UTP. 14 to 19 (SVGKGI) provides a ligand contact to ATP. Residue Tyr54 coordinates L-glutamine. Asp71 lines the ATP pocket. Residues Asp71 and Glu141 each contribute to the Mg(2+) site. Residues 148–150 (DIE), 188–193 (KTKPTQ), and Lys224 contribute to the CTP site. UTP is bound by residues 188-193 (KTKPTQ) and Lys224. The Glutamine amidotransferase type-1 domain occupies 299–534 (YVELKDAYYS…INAAKKVIRD (236 aa)). Gly354 is a binding site for L-glutamine. Residue Cys381 is the Nucleophile; for glutamine hydrolysis of the active site. L-glutamine-binding positions include 382 to 385 (LGMQ), Glu405, and Arg462. Residues His507 and Glu509 contribute to the active site.

Belongs to the CTP synthase family. As to quaternary structure, homotetramer.

It carries out the reaction UTP + L-glutamine + ATP + H2O = CTP + L-glutamate + ADP + phosphate + 2 H(+). It catalyses the reaction L-glutamine + H2O = L-glutamate + NH4(+). The catalysed reaction is UTP + NH4(+) + ATP = CTP + ADP + phosphate + 2 H(+). Its pathway is pyrimidine metabolism; CTP biosynthesis via de novo pathway; CTP from UDP: step 2/2. Allosterically activated by GTP, when glutamine is the substrate; GTP has no effect on the reaction when ammonia is the substrate. The allosteric effector GTP functions by stabilizing the protein conformation that binds the tetrahedral intermediate(s) formed during glutamine hydrolysis. Inhibited by the product CTP, via allosteric rather than competitive inhibition. Functionally, catalyzes the ATP-dependent amination of UTP to CTP with either L-glutamine or ammonia as the source of nitrogen. Regulates intracellular CTP levels through interactions with the four ribonucleotide triphosphates. The sequence is that of CTP synthase from Dehalococcoides mccartyi (strain ATCC BAA-2266 / KCTC 15142 / 195) (Dehalococcoides ethenogenes (strain 195)).